A 346-amino-acid chain; its full sequence is Biotin synthase (346 aa).

The region spanning 41 to 265 is the Radical SAM core domain; sequence NEVQISTLLS…MMPHSYVRLS (225 aa). [4Fe-4S] cluster-binding residues include Cys-56, Cys-60, and Cys-63. The [2Fe-2S] cluster site is built by Cys-100, Cys-131, Cys-191, and Arg-263.

Belongs to the radical SAM superfamily. Biotin synthase family. In terms of assembly, homodimer. [4Fe-4S] cluster serves as cofactor. It depends on [2Fe-2S] cluster as a cofactor.

It carries out the reaction (4R,5S)-dethiobiotin + (sulfur carrier)-SH + 2 reduced [2Fe-2S]-[ferredoxin] + 2 S-adenosyl-L-methionine = (sulfur carrier)-H + biotin + 2 5'-deoxyadenosine + 2 L-methionine + 2 oxidized [2Fe-2S]-[ferredoxin]. It functions in the pathway cofactor biosynthesis; biotin biosynthesis; biotin from 7,8-diaminononanoate: step 2/2. Its function is as follows. Catalyzes the conversion of dethiobiotin (DTB) to biotin by the insertion of a sulfur atom into dethiobiotin via a radical-based mechanism. This is Biotin synthase from Pseudoalteromonas translucida (strain TAC 125).